We begin with the raw amino-acid sequence, 258 residues long: Tritrans,polycis-undecaprenyl-diphosphate synthase (geranylgeranyl-diphosphate specific) (258 aa).

Aspartate 37 is an active-site residue. Mg(2+) is bound at residue aspartate 37. Residues 38-41 (GNRR), histidine 54, and 82-84 (STE) each bind substrate. Asparagine 85 serves as the catalytic Proton acceptor. Residues phenylalanine 86, arginine 88, arginine 207, and 213–215 (RIS) contribute to the substrate site. Glutamate 226 lines the Mg(2+) pocket.

This sequence belongs to the UPP synthase family. As to quaternary structure, homodimer. It depends on Mg(2+) as a cofactor.

It catalyses the reaction geranylgeranyl diphosphate + 7 isopentenyl diphosphate = tri-trans,hepta-cis-undecaprenyl diphosphate + 7 diphosphate. Catalyzes the sequential condensation of isopentenyl diphosphate (IPP) with geranylgeranyl diphosphate (GGPP) to yield (2Z,6Z,10Z,14Z,18Z,22Z,26Z,30E,34E,38E)-undecaprenyl diphosphate (tritrans,heptacis-UPP). It is probably the precursor of glycosyl carrier lipids. This chain is Tritrans,polycis-undecaprenyl-diphosphate synthase (geranylgeranyl-diphosphate specific), found in Thermoplasma volcanium (strain ATCC 51530 / DSM 4299 / JCM 9571 / NBRC 15438 / GSS1).